A 290-amino-acid polypeptide reads, in one-letter code: Putative transport permease ycf38 (290 aa).

A run of 7 helical transmembrane segments spans residues 21–41, 46–66, 86–106, 133–153, 167–187, 194–213, and 261–281; these read VTSF…FIQL, ITLI…GALF, PGIL…PLIF, FFIS…GVFL, FFFL…LALL, LIAV…TALA, and INIG…FLLF. Residues 46-284 form the ABC transmembrane type-2 domain; sequence ITLISGILQP…LVGFLLFKKI (239 aa).

It belongs to the ABC-2 integral membrane protein family.

The protein localises to the plastid. It localises to the cyanelle membrane. In Cyanophora paradoxa, this protein is Putative transport permease ycf38 (ycf38).